We begin with the raw amino-acid sequence, 199 residues long: Elongation factor Ts (199 aa).

An involved in Mg(2+) ion dislocation from EF-Tu region spans residues 82–85 (TDFV).

Belongs to the EF-Ts family.

The protein resides in the cytoplasm. Its function is as follows. Associates with the EF-Tu.GDP complex and induces the exchange of GDP to GTP. It remains bound to the aminoacyl-tRNA.EF-Tu.GTP complex up to the GTP hydrolysis stage on the ribosome. This is Elongation factor Ts from Leptospira interrogans serogroup Icterohaemorrhagiae serovar Lai (strain 56601).